The primary structure comprises 374 residues: Chaperone protein DnaJ (374 aa).

One can recognise a J domain in the interval 5–70 (DYYEVLGVSK…QKRAAYDQYG (66 aa)). Residues 132–210 (GTTVKIRVPT…CHGHGRVEET (79 aa)) form a CR-type zinc finger. Cys-145, Cys-148, Cys-162, Cys-165, Cys-184, Cys-187, Cys-198, and Cys-201 together coordinate Zn(2+). CXXCXGXG motif repeat units lie at residues 145-152 (CKPCGGSG), 162-169 (CTTCGGHG), 184-191 (CPNCRGQG), and 198-205 (CKECHGHG).

This sequence belongs to the DnaJ family. In terms of assembly, homodimer. Requires Zn(2+) as cofactor.

It localises to the cytoplasm. Functionally, participates actively in the response to hyperosmotic and heat shock by preventing the aggregation of stress-denatured proteins and by disaggregating proteins, also in an autonomous, DnaK-independent fashion. Unfolded proteins bind initially to DnaJ; upon interaction with the DnaJ-bound protein, DnaK hydrolyzes its bound ATP, resulting in the formation of a stable complex. GrpE releases ADP from DnaK; ATP binding to DnaK triggers the release of the substrate protein, thus completing the reaction cycle. Several rounds of ATP-dependent interactions between DnaJ, DnaK and GrpE are required for fully efficient folding. Also involved, together with DnaK and GrpE, in the DNA replication of plasmids through activation of initiation proteins. The polypeptide is Chaperone protein DnaJ (Saccharophagus degradans (strain 2-40 / ATCC 43961 / DSM 17024)).